A 439-amino-acid polypeptide reads, in one-letter code: MKKLYLKTHGCQMNEYDSAKMADVLKFSHGLELTEDPAVADVFLLNTCSVREKAQTKVFSELGRWRPFKEKRPHVVIGVGGCVASQEGETILKQAPFVDIVFGPQTLHRLPDLLDSVIQKRKSVVDITFPEIEKFDRLPQPRAEGPSAFVSIMEGCSKYCTFCVVPYTRGEEISRPFDDVIAEVASLCEQGVREITLLGQNVNDYRGLMHDGQVADLALLIHYLAAMDNIERIRFTTSHPSAFSENLIDAYAEEPKLANHLHLPVQSGSDRILAAMKRNYTVLEYKSKIRKLRAVRPDISLSSDFIIGFPGETDADFEATMNLIHDMGFDHSFSFIYSPRPGTPAAQLPDDVPMAVKKERLAILQNRINAKAAEISQSMVGTQQRILVTGPSKKYPDQLSGRTENNRVVNFNGDTPLIGQMVTIKIKEARPYSLWGEIC.

Positions 2–119 constitute an MTTase N-terminal domain; the sequence is KKLYLKTHGC…LPDLLDSVIQ (118 aa). C11, C48, C82, C156, C160, and C163 together coordinate [4Fe-4S] cluster. Positions 142–374 constitute a Radical SAM core domain; sequence RAEGPSAFVS…QNRINAKAAE (233 aa). One can recognise a TRAM domain in the interval 377-439; it reads QSMVGTQQRI…RPYSLWGEIC (63 aa).

This sequence belongs to the methylthiotransferase family. MiaB subfamily. In terms of assembly, monomer. [4Fe-4S] cluster serves as cofactor.

It is found in the cytoplasm. It catalyses the reaction N(6)-dimethylallyladenosine(37) in tRNA + (sulfur carrier)-SH + AH2 + 2 S-adenosyl-L-methionine = 2-methylsulfanyl-N(6)-dimethylallyladenosine(37) in tRNA + (sulfur carrier)-H + 5'-deoxyadenosine + L-methionine + A + S-adenosyl-L-homocysteine + 2 H(+). Functionally, catalyzes the methylthiolation of N6-(dimethylallyl)adenosine (i(6)A), leading to the formation of 2-methylthio-N6-(dimethylallyl)adenosine (ms(2)i(6)A) at position 37 in tRNAs that read codons beginning with uridine. The sequence is that of tRNA-2-methylthio-N(6)-dimethylallyladenosine synthase from Coxiella burnetii (strain CbuK_Q154) (Coxiella burnetii (strain Q154)).